A 281-amino-acid chain; its full sequence is Putative pyruvate, phosphate dikinase regulatory protein (281 aa).

153–160 (GISRTSKT) provides a ligand contact to ADP.

It belongs to the pyruvate, phosphate/water dikinase regulatory protein family. PDRP subfamily.

It catalyses the reaction N(tele)-phospho-L-histidyl/L-threonyl-[pyruvate, phosphate dikinase] + ADP = N(tele)-phospho-L-histidyl/O-phospho-L-threonyl-[pyruvate, phosphate dikinase] + AMP + H(+). The enzyme catalyses N(tele)-phospho-L-histidyl/O-phospho-L-threonyl-[pyruvate, phosphate dikinase] + phosphate + H(+) = N(tele)-phospho-L-histidyl/L-threonyl-[pyruvate, phosphate dikinase] + diphosphate. Bifunctional serine/threonine kinase and phosphorylase involved in the regulation of the pyruvate, phosphate dikinase (PPDK) by catalyzing its phosphorylation/dephosphorylation. The sequence is that of Putative pyruvate, phosphate dikinase regulatory protein from Bdellovibrio bacteriovorus (strain ATCC 15356 / DSM 50701 / NCIMB 9529 / HD100).